Consider the following 103-residue polypeptide: Large ribosomal subunit protein bL21 (103 aa).

Belongs to the bacterial ribosomal protein bL21 family. As to quaternary structure, part of the 50S ribosomal subunit. Contacts protein L20.

Its function is as follows. This protein binds to 23S rRNA in the presence of protein L20. The polypeptide is Large ribosomal subunit protein bL21 (Delftia acidovorans (strain DSM 14801 / SPH-1)).